The following is a 116-amino-acid chain: Small ribosomal subunit protein uS17 (116 aa).

Belongs to the universal ribosomal protein uS17 family. In terms of assembly, part of the 30S ribosomal subunit.

Functionally, one of the primary rRNA binding proteins, it binds specifically to the 5'-end of 16S ribosomal RNA. In Pyrococcus horikoshii (strain ATCC 700860 / DSM 12428 / JCM 9974 / NBRC 100139 / OT-3), this protein is Small ribosomal subunit protein uS17.